The following is a 358-amino-acid chain: tRNA-specific 2-thiouridylase MnmA (358 aa).

ATP-binding positions include 6 to 13 (ALSGGVDS) and M32. C103 functions as the Nucleophile in the catalytic mechanism. An intrachain disulfide couples C103 to C201. G127 lines the ATP pocket. The tract at residues 151-153 (KDQ) is interaction with tRNA. The Cysteine persulfide intermediate role is filled by C201.

Belongs to the MnmA/TRMU family.

It localises to the cytoplasm. It carries out the reaction S-sulfanyl-L-cysteinyl-[protein] + uridine(34) in tRNA + AH2 + ATP = 2-thiouridine(34) in tRNA + L-cysteinyl-[protein] + A + AMP + diphosphate + H(+). Functionally, catalyzes the 2-thiolation of uridine at the wobble position (U34) of tRNA, leading to the formation of s(2)U34. In Thermotoga neapolitana (strain ATCC 49049 / DSM 4359 / NBRC 107923 / NS-E), this protein is tRNA-specific 2-thiouridylase MnmA.